We begin with the raw amino-acid sequence, 786 residues long: Polyribonucleotide nucleotidyltransferase (786 aa).

Mg(2+) contacts are provided by Asp-516 and Asp-522. The KH domain maps to 582-641 (PRVTTVKIPVDKIGMVIGPKGQTINAIQDETGAEISIEDDGTIYVGATNGPSAQAAVERV). The 70-residue stretch at 653–722 (GDRFLGTVVK…QRGKIYLDKV (70 aa)) folds into the S1 motif domain. The interval 722–786 (VRPEGAEGPA…SRPRRRTRHS (65 aa)) is disordered. The span at 727-738 (AEGPAEAAATDR) shows a compositional bias: low complexity. Positions 739–778 (PAGRDRGDRAPRDRGDRGDRERGSRGPDRGDGGEGGGESR) are enriched in basic and acidic residues.

The protein belongs to the polyribonucleotide nucleotidyltransferase family. It depends on Mg(2+) as a cofactor.

The protein resides in the cytoplasm. The enzyme catalyses RNA(n+1) + phosphate = RNA(n) + a ribonucleoside 5'-diphosphate. Involved in mRNA degradation. Catalyzes the phosphorolysis of single-stranded polyribonucleotides processively in the 3'- to 5'-direction. The chain is Polyribonucleotide nucleotidyltransferase from Salinispora arenicola (strain CNS-205).